A 436-amino-acid polypeptide reads, in one-letter code: Acetyl-CoA decarbonylase/synthase complex subunit delta 1 (436 aa).

This sequence belongs to the CdhD family. Heterodimer of delta and gamma chains. The ACDS complex is made up of alpha, epsilon, beta, gamma and delta chains with a probable stoichiometry of (alpha(2)epsilon(2))(4)-beta(8)-(gamma(1)delta(1))(8) (Potential).

Its pathway is one-carbon metabolism; methanogenesis from acetate. Part of a complex that catalyzes the reversible cleavage of acetyl-CoA, allowing growth on acetate as sole source of carbon and energy. Probably maintains the overall quaternary structure of the ACDS complex. This is Acetyl-CoA decarbonylase/synthase complex subunit delta 1 (cdhD1) from Methanosarcina acetivorans (strain ATCC 35395 / DSM 2834 / JCM 12185 / C2A).